We begin with the raw amino-acid sequence, 386 residues long: Alpha-D-kanosaminyltransferase (386 aa).

This sequence belongs to the glycosyltransferase group 1 family.

It carries out the reaction 2'-deamino-2'-hydroxyneamine + UDP-alpha-D-kanosamine = kanamycin A + UDP + H(+). The catalysed reaction is neamine + UDP-alpha-D-kanosamine = kanamycin B + UDP + H(+). It catalyses the reaction paromamine + UDP-alpha-D-kanosamine = kanamycin C + UDP + H(+). The enzyme catalyses 2'-deamino-2'-hydroxyparomamine + UDP-alpha-D-kanosamine = kanamycin X + UDP + H(+). It functions in the pathway antibiotic biosynthesis; kanamycin biosynthesis. Its function is as follows. Glycosyltransferase involved in the biosynthesis of kanamycins by catalyzing the transfer of the hexose kanosamine from UDP-alpha-D-kanosamine to disaccharide precursors. Can also use UDP-alpha-D-glucose as sugar donor with much lower efficiency. The sequence is that of Alpha-D-kanosaminyltransferase (kanE) from Streptomyces kanamyceticus.